A 20-amino-acid polypeptide reads, in one-letter code: Cytosol aminopeptidase (20 aa).

Ser6 is subject to Phosphoserine.

Belongs to the peptidase M17 family. As to quaternary structure, homohexamer. It depends on Zn(2+) as a cofactor. The cofactor is Mn(2+).

The protein resides in the cytoplasm. The enzyme catalyses Release of an N-terminal amino acid, Xaa-|-Yaa-, in which Xaa is preferably Leu, but may be other amino acids including Pro although not Arg or Lys, and Yaa may be Pro. Amino acid amides and methyl esters are also readily hydrolyzed, but rates on arylamides are exceedingly low.. It carries out the reaction an S-substituted L-cysteinylglycine + H2O = an S-substituted L-cysteine + glycine. It catalyses the reaction L-cysteinylglycine + H2O = L-cysteine + glycine. The catalysed reaction is S-benzyl-L-cysteinylglycine + H2O = S-benzyl-L-cysteine + glycine. The enzyme catalyses Release of N-terminal proline from a peptide.. Cytosolic metallopeptidase that catalyzes the removal of unsubstituted N-terminal hydrophobic amino acids from various peptides. The presence of Zn(2+) ions is essential for the peptidase activity, and the association with other cofactors can modulate the substrate spectificity of the enzyme. For instance, in the presence of Mn(2+), it displays a specific Cys-Gly hydrolyzing activity of Cys-Gly-S-conjugates. Involved in the metabolism of glutathione and in the degradation of glutathione S-conjugates, which may play a role in the control of the cell redox status. In Mesocricetus auratus (Golden hamster), this protein is Cytosol aminopeptidase.